We begin with the raw amino-acid sequence, 570 residues long: Serine/threonine-protein kinase flr-4 (570 aa).

The region spanning 40–331 is the Protein kinase domain; it reads YKYIQDLGKG…KLRIQIKKIL (292 aa). ATP is bound by residues 46–54 and K67; that span reads LGKGRFGTV. The Proton acceptor role is filled by D172. The segment at 338-369 is disordered; sequence EEETDISHPISNSNTDSSTAISHNHSNDRKVG. Over residues 346–361 the composition is skewed to polar residues; it reads PISNSNTDSSTAISHN. The next 3 membrane-spanning stretches (helical) occupy residues 400–420, 425–445, and 471–491; these read IMQIFVASGYYLSRILYFLNI, ICYLLLFLSLGITALGSFLLI, and LIISGILIVLMFALLFSCCMV. The tract at residues 550–570 is disordered; the sequence is VRRNHDDYYYDESSGPANEEN.

The protein belongs to the protein kinase superfamily. Ser/Thr protein kinase family. Present in the intestinal cells from comma-stage embryos through the adult stage, although the intestinal expression is weaker after the L1 stage. Accumulates at the cell membrane of intestinal cells, especially the lateral membrane intervening the intestinal cells. Also detected in the muscles of the pharyngeal isthmus from the 3-fold embryonic stage, and in a pair of head neurons, which correspond to the AUA neurons, from the late L1 stage (at protein level).

It is found in the membrane. It carries out the reaction L-seryl-[protein] + ATP = O-phospho-L-seryl-[protein] + ADP + H(+). The enzyme catalyses L-threonyl-[protein] + ATP = O-phospho-L-threonyl-[protein] + ADP + H(+). In terms of biological role, probable serine-threonine protein kinase involved in the control of defecation rhythms. Required to increase the length of defecation cycle period. Acts in a cell-functional rather than developmental aspect in the regulation of defecation rhythms. Prevents preferential activation of the p38 MAPK pathway in response to the levels of vitamin B12 in different food types during larval development, thereby regulating the expression of cytoprotective genes, modulating life span and stress tolerance. In Caenorhabditis elegans, this protein is Serine/threonine-protein kinase flr-4 (flr-4).